The sequence spans 247 residues: Sugar fermentation stimulation protein homolog (247 aa).

It belongs to the SfsA family.

In Aeromonas salmonicida (strain A449), this protein is Sugar fermentation stimulation protein homolog.